The primary structure comprises 147 residues: NADPH-dependent 7-cyano-7-deazaguanine reductase (147 aa).

A disordered region spans residues 1–23 (MQTTHLGKNSPIPQSPEEASLDY). Cysteine 46 serves as the catalytic Thioimide intermediate. Aspartate 53 (proton donor) is an active-site residue. Residues 68–70 (VES) and 87–88 (HE) contribute to the substrate site.

This sequence belongs to the GTP cyclohydrolase I family. QueF type 1 subfamily.

It localises to the cytoplasm. It catalyses the reaction 7-aminomethyl-7-carbaguanine + 2 NADP(+) = 7-cyano-7-deazaguanine + 2 NADPH + 3 H(+). It functions in the pathway tRNA modification; tRNA-queuosine biosynthesis. Functionally, catalyzes the NADPH-dependent reduction of 7-cyano-7-deazaguanine (preQ0) to 7-aminomethyl-7-deazaguanine (preQ1). The chain is NADPH-dependent 7-cyano-7-deazaguanine reductase from Zymomonas mobilis subsp. mobilis (strain ATCC 31821 / ZM4 / CP4).